The chain runs to 242 residues: Type III pantothenate kinase (242 aa).

An ATP-binding site is contributed by 7 to 14; sequence DLGNSRFK. Substrate is bound by residues Tyr-91 and 98–101; that span reads GVDR. Residue Asp-100 is the Proton acceptor of the active site. Thr-121 is an ATP binding site. A substrate-binding site is contributed by Thr-171.

The protein belongs to the type III pantothenate kinase family. Homodimer. It depends on NH4(+) as a cofactor. Requires K(+) as cofactor.

It localises to the cytoplasm. It carries out the reaction (R)-pantothenate + ATP = (R)-4'-phosphopantothenate + ADP + H(+). It participates in cofactor biosynthesis; coenzyme A biosynthesis; CoA from (R)-pantothenate: step 1/5. Functionally, catalyzes the phosphorylation of pantothenate (Pan), the first step in CoA biosynthesis. In Xanthomonas campestris pv. campestris (strain B100), this protein is Type III pantothenate kinase.